Reading from the N-terminus, the 373-residue chain is Chaperone protein DnaJ (373 aa).

A J domain is found at 5-70; sequence DYYEVLGLQK…EKKSNYDQFG (66 aa). A CR-type zinc finger spans residues 132–214; sequence GVEKEITVNR…CRGNGNVRKT (83 aa). The Zn(2+) site is built by Cys145, Cys148, Cys162, Cys165, Cys188, Cys191, Cys202, and Cys205. 4 CXXCXGXG motif repeats span residues 145–152, 162–169, 188–195, and 202–209; these read CEHCNGSG, CPTCSGTG, CDRCSGTG, and CTHCRGNG.

It belongs to the DnaJ family. In terms of assembly, homodimer. Requires Zn(2+) as cofactor.

It localises to the cytoplasm. Its function is as follows. Participates actively in the response to hyperosmotic and heat shock by preventing the aggregation of stress-denatured proteins and by disaggregating proteins, also in an autonomous, DnaK-independent fashion. Unfolded proteins bind initially to DnaJ; upon interaction with the DnaJ-bound protein, DnaK hydrolyzes its bound ATP, resulting in the formation of a stable complex. GrpE releases ADP from DnaK; ATP binding to DnaK triggers the release of the substrate protein, thus completing the reaction cycle. Several rounds of ATP-dependent interactions between DnaJ, DnaK and GrpE are required for fully efficient folding. Also involved, together with DnaK and GrpE, in the DNA replication of plasmids through activation of initiation proteins. In Clostridium botulinum (strain Eklund 17B / Type B), this protein is Chaperone protein DnaJ.